The following is a 173-amino-acid chain: Shikimate kinase 2 (173 aa).

12–17 is an ATP binding site; it reads GCGKTT. 2 residues coordinate Mg(2+): Thr-16 and Asp-32. The substrate site is built by Asp-34, Arg-58, and Gly-79. Residues 112-126 are LID domain; it reads EENPQDNQRPTLTGR. ATP is bound at residue Arg-120. Arg-139 contributes to the substrate binding site. ATP is bound at residue Gln-155.

The protein belongs to the shikimate kinase family. AroL subfamily. As to quaternary structure, monomer. Mg(2+) serves as cofactor.

It localises to the cytoplasm. The enzyme catalyses shikimate + ATP = 3-phosphoshikimate + ADP + H(+). It participates in metabolic intermediate biosynthesis; chorismate biosynthesis; chorismate from D-erythrose 4-phosphate and phosphoenolpyruvate: step 5/7. Its function is as follows. Catalyzes the specific phosphorylation of the 3-hydroxyl group of shikimic acid using ATP as a cosubstrate. This Pectobacterium atrosepticum (strain SCRI 1043 / ATCC BAA-672) (Erwinia carotovora subsp. atroseptica) protein is Shikimate kinase 2.